A 246-amino-acid chain; its full sequence is Mast cell protease-like protein (246 aa).

A signal peptide spans 1–18 (MQALLFLMALLLPSGAGA). A propeptide spans 19–20 (EE) (activation peptide). Residues 21–244 (IIGGVESEPH…HVPWINRVIK (224 aa)) enclose the Peptidase S1 domain. An intrachain disulfide couples C50 to C66. Catalysis depends on charge relay system residues H65 and D109. Intrachain disulfides connect C143-C208 and C174-C187. Residue S202 is the Charge relay system of the active site.

This sequence belongs to the peptidase S1 family. Granzyme subfamily.

The protein is Mast cell protease-like protein (Mcptl) of Mus musculus (Mouse).